An 845-amino-acid polypeptide reads, in one-letter code: Dynein axonemal assembly factor 5 (845 aa).

HEAT repeat units lie at residues Asp-47–Pro-84, Glu-138–Thr-175, Pro-180–Ala-217, Ser-260–Asn-297, Gln-332–Ala-369, Asn-523–Ala-561, Ser-674–Glu-715, and Ala-766–Glu-803.

Belongs to the DNAAF5 family. Expressed in testis.

It is found in the cytoplasm. The protein resides in the dynein axonemal particle. In terms of biological role, cytoplasmic protein involved in the delivery of the dynein machinery to the motile cilium. It is required for the assembly of the axonemal dynein inner and outer arms, two structures attached to the peripheral outer doublet A microtubule of the axoneme, that play a crucial role in cilium motility. The sequence is that of Dynein axonemal assembly factor 5 from Drosophila melanogaster (Fruit fly).